The primary structure comprises 119 residues: Large ribosomal subunit protein uL18 (119 aa).

Belongs to the universal ribosomal protein uL18 family. Part of the 50S ribosomal subunit; part of the 5S rRNA/L5/L18/L25 subcomplex. Contacts the 5S and 23S rRNAs.

This is one of the proteins that bind and probably mediate the attachment of the 5S RNA into the large ribosomal subunit, where it forms part of the central protuberance. The sequence is that of Large ribosomal subunit protein uL18 from Xanthomonas campestris pv. campestris (strain 8004).